We begin with the raw amino-acid sequence, 454 residues long: Anthocyanidin 3-O-galactosyltransferase 3GT6 (454 aa).

An N-terminal signal peptide occupies residues 1–21; it reads MTNSSKGRHVAVLPFPFSTHA. An anthocyanidin-binding residues include S18 and H20. H20 functions as the Proton acceptor in the catalytic mechanism. The Charge relay role is filled by D117. An anthocyanidin is bound at residue H148. Positions 331, 333, 348, 351, 352, 353, and 356 each coordinate UDP-alpha-D-glucose. G371 contacts an anthocyanidin. A UDP-alpha-D-glucose-binding site is contributed by D372. Residue N441 is glycosylated (N-linked (GlcNAc...) asparagine).

This sequence belongs to the UDP-glycosyltransferase family. In terms of assembly, monomer. In terms of tissue distribution, mostly expressed in leaves and flowers and, to a lower extent, in roots. In flowers, mainly observed in petals, stamens and scapes, and at lower levels in pistils and toruses.

It catalyses the reaction cyanidin + UDP-alpha-D-galactose = cyanidin 3-O-beta-D-galactoside + UDP + H(+). The catalysed reaction is cyanidin + UDP-alpha-D-glucose = cyanidin 3-O-beta-D-glucoside + UDP + H(+). It carries out the reaction delphinidin + UDP-alpha-D-glucose = delphinidin 3-O-beta-D-glucoside + UDP. The enzyme catalyses peonidin + UDP-alpha-D-glucose = peonidin 3-O-beta-D-glucoside + UDP. It catalyses the reaction pelargonidin + UDP-alpha-D-glucose = pelargonidin 3-O-beta-D-glucoside + UDP. The catalysed reaction is delphinidin + UDP-alpha-D-galactose = delphinidin 3-O-beta-D-galactoside + UDP + H(+). It carries out the reaction pelargonidin + UDP-alpha-D-galactose = pelargonidin 3-O-beta-D-galactoside betaine + UDP. The enzyme catalyses peonidin + UDP-alpha-D-galactose = peonidin 3-O-beta-D-galactoside + UDP. It catalyses the reaction petunidin + UDP-alpha-D-galactose = petunidin 3-O-beta-D-galactoside + UDP. The catalysed reaction is petunidin + UDP-alpha-D-glucose = petunidin 3-O-beta-D-glucoside + UDP. It carries out the reaction an anthocyanidin + UDP-alpha-D-glucose + H(+) = an anthocyanidin 3-O-beta-D-glucoside + UDP. The enzyme catalyses an anthocyanidin + UDP-alpha-D-galactose = an anthocyanidin 3-O-beta-D-galactoside + UDP. It participates in pigment biosynthesis; anthocyanin biosynthesis. Flavonoid 3-O-glycosyltransferase involved in the biosynthesis of anthocyanins conferring flower red/pink colors, mainly anthocyanidin 3-O-glycosides. Catalyzes the addition of UDP-sugar to the 3-OH of anthocyanidin, with a preference for UDP-galactose (UDP-Gal) as sugar donor and cyanidin as substrate; able to use delphinidin, pelargonidin, peonidin and petunidin as substrates in the presence of UDP-Gal, but barely active on malvidin. Can also use UDP-glucose (UDP-Glu) as sugar donor with cyanidin, delphinidin, pelargonidin, peonidin and petunidin as substrates, but not active on malvidin. This chain is Anthocyanidin 3-O-galactosyltransferase 3GT6, found in Rhododendron delavayi (Rhododendron).